Reading from the N-terminus, the 2430-residue chain is Protein TASOR 2 (2430 aa).

Phosphoserine is present on residues Ser19, Ser219, and Ser384. Disordered regions lie at residues 416–488 (LDRK…GETA) and 577–648 (RGTS…SQSS). The residue at position 685 (Ser685) is a Phosphoserine. The interval 704–727 (LLLQQKPPDDPVVKPKDRPPSARV) is disordered. Residues 710-723 (PPDDPVVKPKDRPP) show a composition bias toward basic and acidic residues. Ser1025, Ser1087, and Ser1172 each carry phosphoserine. The interval 1331–1360 (LTESREVSSADNVSVYPSVSEEPVENKERK) is disordered. Ser1541 is modified (phosphoserine). The interval 1700 to 1727 (EAELHKETTGPGTAGPQSNTTSSLKGER) is disordered. Polar residues predominate over residues 1714–1723 (GPQSNTTSSL). At Ser1848 the chain carries Phosphoserine. Residue Lys2007 forms a Glycyl lysine isopeptide (Lys-Gly) (interchain with G-Cter in SUMO2) linkage. A phosphoserine mark is found at Ser2009, Ser2037, Ser2062, and Ser2066. The segment at 2046–2069 (SDPRPQGQPRRGYTASSLDSSSSW) is disordered.

It belongs to the TASOR family.

This Homo sapiens (Human) protein is Protein TASOR 2.